Consider the following 452-residue polypeptide: Tryptophan biosynthesis protein TrpCF (452 aa).

The interval 1 to 256 is indole-3-glycerol phosphate synthase; the sequence is MQTVLAKIVA…AAVRRVLLGE (256 aa). The segment at 257 to 452 is N-(5'-phosphoribosyl)anthranilate isomerase; that stretch reads NKVCGLTRAQ…ASVFQTLRAY (196 aa).

It in the N-terminal section; belongs to the TrpC family. This sequence in the C-terminal section; belongs to the TrpF family. Monomer.

The catalysed reaction is N-(5-phospho-beta-D-ribosyl)anthranilate = 1-(2-carboxyphenylamino)-1-deoxy-D-ribulose 5-phosphate. It carries out the reaction 1-(2-carboxyphenylamino)-1-deoxy-D-ribulose 5-phosphate + H(+) = (1S,2R)-1-C-(indol-3-yl)glycerol 3-phosphate + CO2 + H2O. Its pathway is amino-acid biosynthesis; L-tryptophan biosynthesis; L-tryptophan from chorismate: step 3/5. It participates in amino-acid biosynthesis; L-tryptophan biosynthesis; L-tryptophan from chorismate: step 4/5. Functionally, bifunctional enzyme that catalyzes two sequential steps of tryptophan biosynthetic pathway. The first reaction is catalyzed by the isomerase, coded by the TrpF domain; the second reaction is catalyzed by the synthase, coded by the TrpC domain. This Salmonella typhi protein is Tryptophan biosynthesis protein TrpCF (trpC).